The primary structure comprises 279 residues: Chromatin modification-related protein EAF5 (279 aa).

The disordered stretch occupies residues 147–179; sequence QLQPHANAGKSGSAGTSATITTTTPHMAHSMDP. Over residues 154–170 the composition is skewed to low complexity; it reads AGKSGSAGTSATITTTT.

The protein belongs to the EAF5 family. In terms of assembly, component of the NuA4 histone acetyltransferase complex composed of at least ACT1, ARP4, YAF9, VID21, SWC4, EAF3, EAF5, EAF6, EAF7, EPL1, ESA1, TRA1 and YNG2.

The protein localises to the nucleus. Component of the NuA4 histone acetyltransferase complex which is involved in transcriptional activation of selected genes principally by acetylation of nucleosomal histone H4 and H2A. The NuA4 complex is also involved in DNA repair. The chain is Chromatin modification-related protein EAF5 (EAF5) from Saccharomyces cerevisiae (strain ATCC 204508 / S288c) (Baker's yeast).